Consider the following 501-residue polypeptide: Glutamyl-tRNA(Gln) amidotransferase subunit A (501 aa).

Catalysis depends on charge relay system residues Lys-84 and Ser-159. The active-site Acyl-ester intermediate is the Ser-183.

Belongs to the amidase family. GatA subfamily. In terms of assembly, heterotrimer of A, B and C subunits.

The catalysed reaction is L-glutamyl-tRNA(Gln) + L-glutamine + ATP + H2O = L-glutaminyl-tRNA(Gln) + L-glutamate + ADP + phosphate + H(+). Its function is as follows. Allows the formation of correctly charged Gln-tRNA(Gln) through the transamidation of misacylated Glu-tRNA(Gln) in organisms which lack glutaminyl-tRNA synthetase. The reaction takes place in the presence of glutamine and ATP through an activated gamma-phospho-Glu-tRNA(Gln). The protein is Glutamyl-tRNA(Gln) amidotransferase subunit A of Streptomyces avermitilis (strain ATCC 31267 / DSM 46492 / JCM 5070 / NBRC 14893 / NCIMB 12804 / NRRL 8165 / MA-4680).